A 193-amino-acid polypeptide reads, in one-letter code: Cysteine and glycine-rich protein 2 (193 aa).

In terms of domain architecture, LIM zinc-binding 1 spans 10–61 (CGACGRTVYHAEEVQCDGRSFHRCCFLCMVCRKNLDSTTVAIHDEEIYCKSC). Positions 64–69 (KKYGPK) match the Nuclear localization signal motif. A Glycyl lysine isopeptide (Lys-Gly) (interchain with G-Cter in SUMO2) cross-link involves residue lysine 91. An N6-acetyllysine mark is found at lysine 112 and lysine 131. The region spanning 119-170 (CSRCGDSVYAAEKIIGAGKPWHKNCFRCAKCGKSLESTTLTEKEGEIYCKGC) is the LIM zinc-binding 2 domain. An N6-acetyllysine; alternate modification is found at lysine 137. Residue lysine 137 is modified to N6-succinyllysine; alternate. The residue at position 161 (lysine 161) is an N6-acetyllysine.

As to quaternary structure, interacts with KAT14. The LIM domain 1 is necessary and sufficient for this interaction. Interacts with GLRX3.

Its subcellular location is the nucleus. Its function is as follows. Drastically down-regulated in response to PDGF-BB or cell injury, that promote smooth muscle cell proliferation and dedifferentiation. Seems to play a role in the development of the embryonic vascular system. In Bos taurus (Bovine), this protein is Cysteine and glycine-rich protein 2 (CSRP2).